Consider the following 401-residue polypeptide: Imidazolonepropionase (401 aa).

Residues H66 and H68 each coordinate Fe(3+). H66 and H68 together coordinate Zn(2+). The 4-imidazolone-5-propanoate site is built by R75, Y138, and H171. Y138 contacts N-formimidoyl-L-glutamate. H236 contributes to the Fe(3+) binding site. H236 contacts Zn(2+). Residue Q239 participates in 4-imidazolone-5-propanoate binding. Residue D311 participates in Fe(3+) binding. D311 contacts Zn(2+). Residues N313 and G315 each coordinate N-formimidoyl-L-glutamate. T316 provides a ligand contact to 4-imidazolone-5-propanoate.

Belongs to the metallo-dependent hydrolases superfamily. HutI family. Zn(2+) is required as a cofactor. Requires Fe(3+) as cofactor.

The protein resides in the cytoplasm. It catalyses the reaction 4-imidazolone-5-propanoate + H2O = N-formimidoyl-L-glutamate. Its pathway is amino-acid degradation; L-histidine degradation into L-glutamate; N-formimidoyl-L-glutamate from L-histidine: step 3/3. In terms of biological role, catalyzes the hydrolytic cleavage of the carbon-nitrogen bond in imidazolone-5-propanoate to yield N-formimidoyl-L-glutamate. It is the third step in the universal histidine degradation pathway. The chain is Imidazolonepropionase from Pseudomonas savastanoi pv. phaseolicola (strain 1448A / Race 6) (Pseudomonas syringae pv. phaseolicola (strain 1448A / Race 6)).